Here is a 205-residue protein sequence, read N- to C-terminus: Nuclear transcription factor Y subunit C-6 (205 aa).

The disordered stretch occupies residues 1 to 24 (MEPKSTTPPPPPPPPVLGAPVPYP).

It belongs to the NFYC/HAP5 subunit family. Heterotrimeric transcription factor composed of three components, NF-YA, NF-YB and NF-YC. NF-YB and NF-YC must interact and dimerize for NF-YA association and DNA binding. Interacts with NFYB2. Interacts with NFYB8, NFYB10 and HD5/NFYB11.

It is found in the nucleus. Its subcellular location is the cytoplasm. Component of the NF-Y/HAP transcription factor complex. This Oryza sativa subsp. japonica (Rice) protein is Nuclear transcription factor Y subunit C-6.